The sequence spans 149 residues: Transcriptional repressor NrdR (149 aa).

A zinc finger spans residues 3-34 (CPFCAAEETKVVDSRLAADGYQIRRRRECTSC). In terms of domain architecture, ATP-cone spans 49–139 (PYVIKNNGNR…VYLSFDDIEE (91 aa)).

It belongs to the NrdR family. Zn(2+) is required as a cofactor.

Functionally, negatively regulates transcription of bacterial ribonucleotide reductase nrd genes and operons by binding to NrdR-boxes. In Actinobacillus pleuropneumoniae serotype 5b (strain L20), this protein is Transcriptional repressor NrdR.